The following is a 270-amino-acid chain: Elongation factor Ts (270 aa).

An involved in Mg(2+) ion dislocation from EF-Tu region spans residues 75-78; the sequence is TDFV.

The protein belongs to the EF-Ts family.

It localises to the cytoplasm. Functionally, associates with the EF-Tu.GDP complex and induces the exchange of GDP to GTP. It remains bound to the aminoacyl-tRNA.EF-Tu.GTP complex up to the GTP hydrolysis stage on the ribosome. The sequence is that of Elongation factor Ts from Cutibacterium acnes (strain DSM 16379 / KPA171202) (Propionibacterium acnes).